The following is a 77-amino-acid chain: UPF0349 protein lmo2392 (77 aa).

This sequence belongs to the UPF0349 family.

The protein is UPF0349 protein lmo2392 of Listeria monocytogenes serovar 1/2a (strain ATCC BAA-679 / EGD-e).